A 218-amino-acid chain; its full sequence is MEAEGCRYQFRVALLGDAAVGKTSLLRSYVAGAPGAPEPEPEPEPTVGAECYRRALQLRAGPRVKLQLWDTAGHERFRCITRSFYRNVVGVLLVFDVTNRKSFEHIQDWHQEVMATQGPDKVIFLLVGHKSDLQSTRCVSAQEAEELAASLGMAFVETSVKNNCNVDLAFDTLADAIQQALQQGDIKLEEGWGGVRLIHKTQIPRSPSRKQHSGPCQC.

GTP is bound by residues Ala-19, Gly-21, Lys-22, Thr-23, and Thr-46. Mg(2+)-binding residues include Thr-23, Thr-46, and Asp-70. Residues Gly-73, Lys-130, Asp-132, Val-160, and Lys-161 each coordinate GTP. S-geranylgeranyl cysteine attachment occurs at residues Cys-216 and Cys-218.

This sequence belongs to the small GTPase superfamily. Rab family. The cofactor is Mg(2+).

It localises to the membrane. The enzyme catalyses GTP + H2O = GDP + phosphate + H(+). Regulated by guanine nucleotide exchange factors (GEFs) which promote the exchange of bound GDP for free GTP. Regulated by GTPase activating proteins (GAPs) which increase the GTP hydrolysis activity. Inhibited by GDP dissociation inhibitors (GDIs). Functionally, the small GTPases Rab are key regulators of intracellular membrane trafficking, from the formation of transport vesicles to their fusion with membranes. Rabs cycle between an inactive GDP-bound form and an active GTP-bound form that is able to recruit to membranes different sets of downstream effectors directly responsible for vesicle formation, movement, tethering and fusion. The physiological function of RAB42 remains undefined. The chain is Ras-related protein Rab-42 from Homo sapiens (Human).